A 276-amino-acid polypeptide reads, in one-letter code: tRNA (guanine-N(7)-)-methyltransferase (276 aa).

Residues 1–36 (MAAETRNVAGAEAPPPQKRYYRQRAHSNPMADHTLR) form a disordered region. Position 2 is an N-acetylalanine (Ala-2). Ser-27 bears the Phosphoserine; by PKB/AKT1 and RPS6KA3 mark. S-adenosyl-L-homocysteine contacts are provided by Gly-84, Glu-107, Ile-108, Arg-109, Asn-140, Ala-141, and Leu-160. The S-adenosyl-L-methionine site is built by Gly-84 and Glu-107. S-adenosyl-L-methionine-binding residues include Arg-109, Asn-140, Ala-141, and Leu-160. Asp-163 is an active-site residue. The alphaC helix stretch occupies residues 164 to 172 (PHFKRTKHK). The S-adenosyl-L-homocysteine site is built by Thr-238 and Glu-240. Positions 238 and 240 each coordinate S-adenosyl-L-methionine. The interval 238–246 (TEEGKKVLR) is alpha6 helix.

The protein belongs to the class I-like SAM-binding methyltransferase superfamily. TrmB family. Catalytic component of the METTL1-WDR4 complex, composed of METTL1 and WDR4. In terms of processing, phosphorylation at Ser-27 by PKB/AKT1 inactivates its methyltransferase activity via a steric interference mechanism in the active site that locally disrupts the catalytic center. Phosphorylation at Ser-27 does not affect the interaction with WDR4. Ubiquitous.

It is found in the nucleus. It carries out the reaction guanosine(46) in tRNA + S-adenosyl-L-methionine = N(7)-methylguanosine(46) in tRNA + S-adenosyl-L-homocysteine. The catalysed reaction is a guanosine in mRNA + S-adenosyl-L-methionine = an N(7)-methylguanosine in mRNA + S-adenosyl-L-homocysteine. The enzyme catalyses a guanosine in miRNA + S-adenosyl-L-methionine = an N(7)-methylguanosine in miRNA + S-adenosyl-L-homocysteine. Its pathway is tRNA modification; N(7)-methylguanine-tRNA biosynthesis. Functionally, catalytic component of METTL1-WDR4 methyltransferase complex that mediates the formation of N(7)-methylguanine in a subset of RNA species, such as tRNAs, mRNAs and microRNAs (miRNAs). Catalyzes the formation of N(7)-methylguanine at position 46 (m7G46) in a large subset of tRNAs that contain the 5'-RAGGU-3' motif within the variable loop. M7G46 interacts with C13-G22 in the D-loop to stabilize tRNA tertiary structure and protect tRNAs from decay. Also acts as a methyltransferase for a subset of internal N(7)-methylguanine in mRNAs. Internal N(7)-methylguanine methylation of mRNAs in response to stress promotes their relocalization to stress granules, thereby suppressing their translation. Also methylates a specific subset of miRNAs, such as let-7. N(7)-methylguanine methylation of let-7 miRNA promotes let-7 miRNA processing by disrupting an inhibitory secondary structure within the primary miRNA transcript (pri-miRNA). Acts as a regulator of embryonic stem cell self-renewal and differentiation. The polypeptide is tRNA (guanine-N(7)-)-methyltransferase (Homo sapiens (Human)).